Reading from the N-terminus, the 393-residue chain is ATP phosphoribosyltransferase regulatory subunit (393 aa).

It belongs to the class-II aminoacyl-tRNA synthetase family. HisZ subfamily. Heteromultimer composed of HisG and HisZ subunits.

The protein localises to the cytoplasm. It functions in the pathway amino-acid biosynthesis; L-histidine biosynthesis; L-histidine from 5-phospho-alpha-D-ribose 1-diphosphate: step 1/9. Functionally, required for the first step of histidine biosynthesis. May allow the feedback regulation of ATP phosphoribosyltransferase activity by histidine. The chain is ATP phosphoribosyltransferase regulatory subunit from Marinobacter nauticus (strain ATCC 700491 / DSM 11845 / VT8) (Marinobacter aquaeolei).